Here is a 184-residue protein sequence, read N- to C-terminus: ATP synthase subunit b, chloroplastic (184 aa).

The chain crosses the membrane as a helical span at residues 31–53 (LINLAVVIGVLVYFGKGVLTTIL).

The protein belongs to the ATPase B chain family. F-type ATPases have 2 components, F(1) - the catalytic core - and F(0) - the membrane proton channel. F(1) has five subunits: alpha(3), beta(3), gamma(1), delta(1), epsilon(1). F(0) has four main subunits: a(1), b(1), b'(1) and c(10-14). The alpha and beta chains form an alternating ring which encloses part of the gamma chain. F(1) is attached to F(0) by a central stalk formed by the gamma and epsilon chains, while a peripheral stalk is formed by the delta, b and b' chains.

The protein resides in the plastid. It is found in the chloroplast thylakoid membrane. Functionally, f(1)F(0) ATP synthase produces ATP from ADP in the presence of a proton or sodium gradient. F-type ATPases consist of two structural domains, F(1) containing the extramembraneous catalytic core and F(0) containing the membrane proton channel, linked together by a central stalk and a peripheral stalk. During catalysis, ATP synthesis in the catalytic domain of F(1) is coupled via a rotary mechanism of the central stalk subunits to proton translocation. Its function is as follows. Component of the F(0) channel, it forms part of the peripheral stalk, linking F(1) to F(0). This is ATP synthase subunit b, chloroplastic from Staurastrum punctulatum (Green alga).